The following is a 257-amino-acid chain: Ribonuclease HII (257 aa).

Residues 72–257 (TYIAGIDEVG…FAPIKDMIKK (186 aa)) enclose the RNase H type-2 domain. Residues Asp78, Glu79, and Asp170 each contribute to the a divalent metal cation site.

It belongs to the RNase HII family. It depends on Mn(2+) as a cofactor. Mg(2+) is required as a cofactor.

It is found in the cytoplasm. It catalyses the reaction Endonucleolytic cleavage to 5'-phosphomonoester.. Functionally, endonuclease that specifically degrades the RNA of RNA-DNA hybrids. The chain is Ribonuclease HII from Bacillus anthracis (strain A0248).